The following is a 196-amino-acid chain: Elongation factor Ts (196 aa).

An involved in Mg(2+) ion dislocation from EF-Tu region spans residues 80–83 (TDFV).

This sequence belongs to the EF-Ts family.

It localises to the cytoplasm. In terms of biological role, associates with the EF-Tu.GDP complex and induces the exchange of GDP to GTP. It remains bound to the aminoacyl-tRNA.EF-Tu.GTP complex up to the GTP hydrolysis stage on the ribosome. This is Elongation factor Ts from Thermus thermophilus (strain ATCC BAA-163 / DSM 7039 / HB27).